Reading from the N-terminus, the 180-residue chain is UPF0340 protein LACR_0494 (180 aa).

Belongs to the UPF0340 family.

The sequence is that of UPF0340 protein LACR_0494 from Lactococcus lactis subsp. cremoris (strain SK11).